The chain runs to 609 residues: Albumin (609 aa).

The first 18 residues, 1–18 (MKWVTFISLLFLFSSAYS), serve as a signal peptide directing secretion. The propeptide occupies 19–24 (RGVFRR). 3 consecutive Albumin domains span residues 19 to 210 (RGVF…DELR), 211 to 403 (DEGK…EFKP), and 404 to 601 (LVEE…KLVA). His27 provides a ligand contact to Cu cation. Phosphoserine; by FAM20C is present on Ser29. Glu30 contacts Ca(2+). Residue Lys36 is glycosylated (N-linked (Glc) (glycation) lysine). Asp37 contacts Ca(2+). An N-linked (Glc) (glycation) lysine; in vitro glycan is attached at Lys75. The cysteines at positions 77 and 86 are disulfide-linked. Ser82 and Ser89 each carry phosphoserine; by FAM20C. Position 91 (His91) interacts with Zn(2+). Disulfide bonds link Cys99/Cys115, Cys114/Cys125, Cys148/Cys193, and Cys192/Cys201. At Thr107 the chain carries Phosphothreonine; by FAM20C. N-linked (Glc) (glycation) lysine; in vitro glycosylation is found at Lys161 and Lys186. N-linked (Glc) (glycation) lysine; in vitro glycosylation occurs at Lys223. 2 disulfides stabilise this stretch: Cys224–Cys270 and Cys269–Cys277. Position 229 is an N6-succinyllysine (Lys229). Lys249 carries an N-linked (Glc) (glycation) lysine; in vitro glycan. A glycan (N-linked (Glc) (glycation) lysine) is linked at Lys257. Residue Lys264 participates in (4Z,15Z)-bilirubin IXalpha binding. Residue Glu268 participates in Ca(2+) binding. Zn(2+) is bound by residues His271 and Asp273. 4 residues coordinate Ca(2+): Asp273, Glu276, Asp279, and Asp283. Disulfide bonds link Cys289–Cys303 and Cys302–Cys313. Phosphoserine is present on Ser297. Lys300 carries N-linked (Glc) (glycation) lysine; in vitro glycosylation. N-linked (Glc) (glycation) lysine glycosylation is present at Lys305. N-linked (Glc) (glycation) lysine; in vitro glycosylation occurs at Lys337. 2 disulfides stabilise this stretch: Cys340-Cys385 and Cys384-Cys393. Lys341 carries an N-linked (Glc) (glycation) lysine glycan. N-linked (GlcNAc...) asparagine; in variant Redhill glycosylation occurs at Asn342. N-linked (Glc) (glycation) lysine; in vitro glycosylation occurs at Lys347. The N-linked (Glc) (glycation) lysine glycan is linked to Lys375. Lys402 and Lys437 each carry an N-linked (Glc) (glycation) lysine; in vitro glycan. 4 disulfides stabilise this stretch: Cys416/Cys462, Cys461/Cys472, Cys485/Cys501, and Cys500/Cys511. The residue at position 443 (Ser443) is a Phosphoserine. Phosphothreonine occurs at positions 444 and 446. Lys460 is subject to N6-succinyllysine. Lys463 carries an N-linked (Glc) (glycation) lysine glycan. N-linked (Glc) (glycation) lysine; in vitro glycosylation is present at Lys468. Ser513 carries the phosphoserine modification. A glycan (N-linked (GlcNAc...) asparagine; in variant Casebrook) is linked at Asp518. Cystine bridges form between Cys538–Cys583 and Cys582–Cys591. Residue Lys543 is modified to N6-succinyllysine. Lys549 carries N-linked (Glc) (glycation) lysine glycosylation. Lys558 bears the N6-methyllysine; alternate mark. Lys558 carries N-linked (Glc) (glycation) lysine; alternate glycosylation. 2 N-linked (Glc) (glycation) lysine; in vitro glycosylation sites follow: Lys560 and Lys569. An N6-succinyllysine modification is found at Lys588. Lys597 is a glycosylation site (N-linked (Glc) (glycation) lysine; in vitro).

The protein belongs to the ALB/AFP/VDB family. In terms of assembly, interacts with FCGRT; this interaction regulates ALB homeostasis. Interacts with TASOR. In plasma, occurs in a covalently-linked complex with chromophore-bound alpha-1-microglobulin with molar ratio 1:2 and 1:1; this interaction does not prevent fatty acid binding to ALB. Kenitra variant is partially O-glycosylated at Thr-620. It has two new disulfide bonds Cys-600 to Cys-602 and Cys-601 to Cys-606. In terms of processing, glycated in diabetic patients. Post-translationally, phosphorylated by FAM20C in the extracellular medium. Acetylated on Lys-223 by acetylsalicylic acid. As to expression, plasma.

It localises to the secreted. In terms of biological role, binds water, Ca(2+), Na(+), K(+), fatty acids, hormones, bilirubin and drugs. Its main function is the regulation of the colloidal osmotic pressure of blood. Major zinc transporter in plasma, typically binds about 80% of all plasma zinc. Major calcium and magnesium transporter in plasma, binds approximately 45% of circulating calcium and magnesium in plasma. Potentially has more than two calcium-binding sites and might additionally bind calcium in a non-specific manner. The shared binding site between zinc and calcium at residue Asp-273 suggests a crosstalk between zinc and calcium transport in the blood. The rank order of affinity is zinc &gt; calcium &gt; magnesium. Binds to the bacterial siderophore enterobactin and inhibits enterobactin-mediated iron uptake of E.coli from ferric transferrin, and may thereby limit the utilization of iron and growth of enteric bacteria such as E.coli. Does not prevent iron uptake by the bacterial siderophore aerobactin. In Homo sapiens (Human), this protein is Albumin (ALB).